Consider the following 344-residue polypeptide: MRVIRPVEHADIAALMQLAGKTGGGLTSLPANEATLAARIERALKTWSDELPKGEQGYVFVLEDSETGEVGGICAIEVAVGLNDPWYNYRVGTLVHASKELNVYNALPTLFLSNDHTGSSELCTLFLDPEWRKEGNGYLLSKSRFMFMAAFRDKFNEKVVAEMRGVIDEHGYSPFWQSLGKRFFSMDFSRADFLCGTGQKAFIAELMPKHPIYTHFLSEEAQAVIGEVHPQTAPARAVLEKEGFRYRHYIDIFDGGPTLECDIDRVRAIRKSRLVEVAEGQPAPGDYPACLVANENYHHFRAALVRADPQTSRLVLTAAQLDALKCRAGDHVRLVRLCAEEKTV.

Succinyl-CoA is bound at residue Leu-125. The active-site Proton donor is the His-229.

Belongs to the arginine N-succinyltransferase family.

It carries out the reaction succinyl-CoA + L-arginine = N(2)-succinyl-L-arginine + CoA + H(+). It participates in amino-acid degradation; L-arginine degradation via AST pathway; L-glutamate and succinate from L-arginine: step 1/5. Functionally, catalyzes the transfer of succinyl-CoA to arginine to produce N(2)-succinylarginine. This chain is Arginine N-succinyltransferase, found in Salmonella agona (strain SL483).